We begin with the raw amino-acid sequence, 394 residues long: MAKAKFERVKPHVNVGTIGHVDHGKTTLTAAITNVLAKVYGGVAKDFASIDNAPEERERGITISTSHVEYDTPTRHYAHVDCPGHADYVKNMITGAAQMDGAILVVAATDGPMPQTREHILLSRQVGVPYIIVFMNKCDMVDDEELLELVEMEVRELLSEYDFPGDDLPLIQGSALKALEGEKEWEDKIVELANALDSYIPEPQRDIDKPFIMPIEDVFSIQGRGTVVTGRVEAGIIRINDEIEIVGIRDTTKSICTGVEMFRKLLDEGRAGENIGALLRGTKREDVERGQVLAKPGSIKPHTTFESEVYVLSKDEGGRHTPFFKGYRPQFYFRTTDVTGDVQLPEGVEMVMPGDNVKMTVTLIAPIAMDEGLRFAIREGGRTVGAGVVANIVA.

In terms of domain architecture, tr-type G spans 10–204 (KPHVNVGTIG…ALDSYIPEPQ (195 aa)). The segment at 19–26 (GHVDHGKT) is G1. A GTP-binding site is contributed by 19 to 26 (GHVDHGKT). Residue T26 coordinates Mg(2+). Residues 60–64 (GITIS) form a G2 region. The G3 stretch occupies residues 81 to 84 (DCPG). GTP is bound by residues 81–85 (DCPGH) and 136–139 (NKCD). The G4 stretch occupies residues 136–139 (NKCD). The interval 174-176 (SAL) is G5.

It belongs to the TRAFAC class translation factor GTPase superfamily. Classic translation factor GTPase family. EF-Tu/EF-1A subfamily. Monomer.

Its subcellular location is the cytoplasm. The catalysed reaction is GTP + H2O = GDP + phosphate + H(+). In terms of biological role, GTP hydrolase that promotes the GTP-dependent binding of aminoacyl-tRNA to the A-site of ribosomes during protein biosynthesis. The protein is Elongation factor Tu 1 of Pseudoalteromonas translucida (strain TAC 125).